We begin with the raw amino-acid sequence, 230 residues long: Large ribosomal subunit protein uL1 (230 aa).

Belongs to the universal ribosomal protein uL1 family. In terms of assembly, part of the 50S ribosomal subunit.

In terms of biological role, binds directly to 23S rRNA. The L1 stalk is quite mobile in the ribosome, and is involved in E site tRNA release. Functionally, protein L1 is also a translational repressor protein, it controls the translation of the L11 operon by binding to its mRNA. In Bifidobacterium adolescentis (strain ATCC 15703 / DSM 20083 / NCTC 11814 / E194a), this protein is Large ribosomal subunit protein uL1.